Reading from the N-terminus, the 500-residue chain is AAA-ATPase At3g28580 (500 aa).

The helical transmembrane segment at 7-29 (LWTNTGSALATLMFVYTIFKQFF) threads the bilayer. A disordered region spans residues 174–193 (NRERKLYSNTPGQSHGNNSK). Residues 180–193 (YSNTPGQSHGNNSK) are compositionally biased toward polar residues. 247-254 (GPPGTGKS) provides a ligand contact to ATP. The disordered stretch occupies residues 462-500 (KEEAKKKVEEEEEEKQRKKEKVKEIEAEKEKKKKIEEEN).

This sequence belongs to the AAA ATPase family. BCS1 subfamily. Mg(2+) is required as a cofactor.

The protein localises to the membrane. It catalyses the reaction ATP + H2O = ADP + phosphate + H(+). This is AAA-ATPase At3g28580 from Arabidopsis thaliana (Mouse-ear cress).